We begin with the raw amino-acid sequence, 256 residues long: Acetylglutamate kinase (256 aa).

Residues 40-41 (GG), R62, and N153 each bind substrate.

Belongs to the acetylglutamate kinase family. ArgB subfamily.

It localises to the cytoplasm. The enzyme catalyses N-acetyl-L-glutamate + ATP = N-acetyl-L-glutamyl 5-phosphate + ADP. It functions in the pathway amino-acid biosynthesis; L-arginine biosynthesis; N(2)-acetyl-L-ornithine from L-glutamate: step 2/4. Functionally, catalyzes the ATP-dependent phosphorylation of N-acetyl-L-glutamate. This Bacillus cytotoxicus (strain DSM 22905 / CIP 110041 / 391-98 / NVH 391-98) protein is Acetylglutamate kinase.